Reading from the N-terminus, the 463-residue chain is Xanthone prenyltransferase B (463 aa).

The protein belongs to the tryptophan dimethylallyltransferase family.

The protein operates within secondary metabolite biosynthesis. Its activity is regulated as follows. Mn(2+) and Co(2+) strongly enhance prenylation activity. In terms of biological role, dehydrogenase involved in the conversion of monodictyphenone to the prenyl xanthones such as emericellin, shamixanthone and epishamixanthone. Monodictyphenone is first converted to variecoxanthone A via a paeciloxanthone intermediate by the consecutive actions of the FAD-dependent monooxygenase mdpD and the xanthone prenyltransferase xptB. XptB catalyzes regular O-prenylation at the hydroxy group of C-7 of the xanthone ring. Variecoxanthone A is further prenylated to emericellin by xptA before being reduced to shamixanthone and epishamixanthone by the dehydrogenase xptC. This chain is Xanthone prenyltransferase B, found in Emericella nidulans (strain FGSC A4 / ATCC 38163 / CBS 112.46 / NRRL 194 / M139) (Aspergillus nidulans).